The sequence spans 488 residues: 26S proteasome non-ATPase regulatory subunit 3 homolog A (488 aa).

The PCI domain maps to 240-421 (CRYLFYLGKI…GCMVSKETGD (182 aa)). Residues 451–488 (RFPPNTHKEKESDEKRRERKQQEEELAKHMAEEDDDDF) are disordered. Residues 456–481 (THKEKESDEKRRERKQQEEELAKHMA) are compositionally biased toward basic and acidic residues.

It belongs to the proteasome subunit S3 family. As to quaternary structure, component of the 19S regulatory particle (RP/PA700) lid subcomplex of the 26S proteasome. The 26S proteasome is composed of a core protease (CP), known as the 20S proteasome, capped at one or both ends by the 19S regulatory particle (RP/PA700). The RP/PA700 complex is composed of at least 17 different subunits in two subcomplexes, the base and the lid, which form the portions proximal and distal to the 20S proteolytic core, respectively. Interacts with UCH1 and UCH2. In terms of tissue distribution, ubiquitous with highest expression in flowers.

Functionally, acts as a regulatory subunit of the 26 proteasome which is involved in the ATP-dependent degradation of ubiquitinated proteins. This is 26S proteasome non-ATPase regulatory subunit 3 homolog A from Arabidopsis thaliana (Mouse-ear cress).